The following is a 300-amino-acid chain: 4-hydroxy-tetrahydrodipicolinate synthase (300 aa).

Pyruvate is bound at residue Thr56. Tyr145 functions as the Proton donor/acceptor in the catalytic mechanism. Lys173 acts as the Schiff-base intermediate with substrate in catalysis. Val215 lines the pyruvate pocket.

Belongs to the DapA family. Homotetramer; dimer of dimers.

The protein localises to the cytoplasm. It carries out the reaction L-aspartate 4-semialdehyde + pyruvate = (2S,4S)-4-hydroxy-2,3,4,5-tetrahydrodipicolinate + H2O + H(+). It participates in amino-acid biosynthesis; L-lysine biosynthesis via DAP pathway; (S)-tetrahydrodipicolinate from L-aspartate: step 3/4. In terms of biological role, catalyzes the condensation of (S)-aspartate-beta-semialdehyde [(S)-ASA] and pyruvate to 4-hydroxy-tetrahydrodipicolinate (HTPA). This chain is 4-hydroxy-tetrahydrodipicolinate synthase, found in Prochlorococcus marinus (strain MIT 9301).